The primary structure comprises 121 residues: MPYLSVAKFGGTSVANHDAMTACAKIVIADPNTRVVVLSASAGVTNLLVALANGVKATEREKLIGNDLHITSGVAKRIFDTVQSYNVRMISYGASTNNVCMLVQSEHSDEIVRSLHKSLFE.

The protein belongs to the aspartokinase family.

The sequence is that of Putative inactive aspartokinase 3 HI_1632 from Haemophilus influenzae (strain ATCC 51907 / DSM 11121 / KW20 / Rd).